Reading from the N-terminus, the 416-residue chain is Multifunctional CCA protein (416 aa).

ATP-binding residues include Gly-8 and Arg-11. Residues Gly-8 and Arg-11 each contribute to the CTP site. Positions 21 and 23 each coordinate Mg(2+). ATP-binding residues include Arg-91, Arg-137, and Arg-140. Residues Arg-91, Arg-137, and Arg-140 each coordinate CTP. The HD domain occupies 228–329 (TGVHTLMVLA…VKIFDKADFW (102 aa)).

It belongs to the tRNA nucleotidyltransferase/poly(A) polymerase family. Bacterial CCA-adding enzyme type 1 subfamily. As to quaternary structure, monomer. Can also form homodimers and oligomers. Requires Mg(2+) as cofactor. Ni(2+) is required as a cofactor.

It carries out the reaction a tRNA precursor + 2 CTP + ATP = a tRNA with a 3' CCA end + 3 diphosphate. It catalyses the reaction a tRNA with a 3' CCA end + 2 CTP + ATP = a tRNA with a 3' CCACCA end + 3 diphosphate. In terms of biological role, catalyzes the addition and repair of the essential 3'-terminal CCA sequence in tRNAs without using a nucleic acid template. Adds these three nucleotides in the order of C, C, and A to the tRNA nucleotide-73, using CTP and ATP as substrates and producing inorganic pyrophosphate. tRNA 3'-terminal CCA addition is required both for tRNA processing and repair. Also involved in tRNA surveillance by mediating tandem CCA addition to generate a CCACCA at the 3' terminus of unstable tRNAs. While stable tRNAs receive only 3'-terminal CCA, unstable tRNAs are marked with CCACCA and rapidly degraded. The protein is Multifunctional CCA protein of Shewanella baltica (strain OS195).